The chain runs to 941 residues: MEGRQEDQMNRQEEVEQSNNYDRSVDHARTGRSSWIDNSEINSKWIPQHSLQLEMNNIEGEGSVRENDEEEEEIVVLDPEHPLMKRFQTALKNNFTNQLERLNLDLCEKVVVEKAEAQRRHDLAEEVYMVQEMLARLQASLEVCQETNSEAAAQHRQAEDHLYVVKNQYQDTASQTNVQRLQVLELQSKVDNLALKLLYMQEAKSDLCSDIKAIINASNKAQKERTQTEEQKHQQDIYVERLTNRVEKLLEQISLYDLQLISQTEQTRAAKDSLSEAQLELDSVIVEHRQLLQQWKSSLLMMKRRDEAYTAMQEELRQANDQMLSLDTEIESYKKSITQEEEQNECLTLRLNRGQTDCTTSRKLITHSQNLQEVLQAQLSTYTRILQETENTLSTLHGNLEMHQSALKALRKQMEKVSAVRLDLESQIMNKLQEQLTHNNAAKYSRRMNDKTAVYRREKEAQLIKFENDFNTVTLEGQELATHLDSLLAFQAELEQKSTQRHLLLSSREEEIVKQITDIERKQATISIYNKKIKDIVSSTGHEDLGPLEIHAATLSKELEEVGAKIKECQQLWLWQQGELVRFTQEKQAHSSSVQILQTQLTILQQGKIRRESEMEQDQSELADLDKQIKVLMADMVKLNSLLNKNSDLNHALQQSSNLMETEFRQRLKEAEKDSAETQLKLERLNEEKERLINSLVEAERQVMLWGKRTQLMQETCSAIDSDIGQGDIRTMRAEIHRMEVRYAQLMKQQERLLRDMESVVAKSKTIAVWSEAQARTQAHKQPTHNDYHNTIQSLRRKILQTKKQTEECDGVIAQLEERLGSMTSRLQDKQMHLNNIQNTEAFLSQDLRRLQEIKERNLYRLPVLQTRAKHLHAVKEGRYTPMATGVTALELGTHKQEERLKMVSLTLQRLAQEYPQHHSTLHRMNSILAEHLHGECPNSQ.

Positions 1–14 (MEGRQEDQMNRQEE) are enriched in basic and acidic residues. Residues 1–31 (MEGRQEDQMNRQEEVEQSNNYDRSVDHARTG) are disordered. Coiled coils occupy residues 130–154 (VQEM…AAAQ), 210–430 (DIKA…QIMN), 548–572 (LEIH…CQQL), 609–765 (IRRE…AKSK), 814–856 (AQLE…EIKE), and 895–915 (HKQE…AQEY).

The protein belongs to the CCDC40 family. In terms of tissue distribution, expressed in tissues that contain motile cilia, including Kupffer's vesicle, the floorplate, the pronephric tubules and the otic vesicle.

The protein resides in the cytoplasm. It is found in the cell projection. It localises to the cilium. Functionally, required for assembly of dynein regulatory complex (DRC) and inner dynein arm (IDA) complexes, which are responsible for ciliary beat regulation, thereby playing a central role in motility in cilia and flagella. Probably acts together with ccdc39 to form a molecular ruler that determines the 96 nanometer (nm) repeat length and arrangements of components in cilia and flagella. This is Coiled-coil domain-containing protein 40 (ccdc40) from Danio rerio (Zebrafish).